We begin with the raw amino-acid sequence, 896 residues long: MLSTLIKKMFGSRNERTLRRMEKSVMAINAFEPKMQALSNEELAGKTQEFKERFNNGESLDELLAEAFATVREVSLRTLGLRHFDVQLIGGMVLHEGNIAEMRTGEGKTLVATLPAYLNAISGRGVHIVTVNDYLAKRDSQWMKPIYEFLGLTVGVIYPDMSHKEKQEAYKADIVYGTNNEYGFDYLRDNMAFSLTDKVQRELNFAIVDEVDSILIDEARTPLIISGAAEDSSELYIKINSLIPQLKKQEEEGDEGDYTIDEKQKQAHLTDAGHLHIEELLTKAKLLDPGESLYHASNIMLMHHVNAALKAHAMFHRDIDYIVKDNQVVIVDEHTGRTMPGRRWSEGLHQAVEAKEGVPIQNENQTLASITFQNFFRMYNKLSGMTGTADTEAYEFQQIYNLEVVVIPTNRSMIRKDEADLVYLTQADKFQAIIEDVRECGVRKQPVLVGTVSIEASEFLSQLLKKENIKHQVLNAKFHEKEAQIIAEAGRPGAVTIATNMAGRGTDIVLGGSLAADLANLPADASEQEKEAVKKEWQKRHDEVIAAGGLRIIGSERHESRRIDNQLRGRAGRQGDPGSSRFYLSLEDNLMRIFASERVASMMRRLGMQPGEPIEHSLVTRAIENAQRKLEGHHFDVRKQLLDYDNVANDQRQVIYTQRASIMAMTDTQEVVEMMREEVMNSLVDTYIPPQSLEDQWDPQALSDVLSDEFKIKAPVPDWIDKDHSIQPDQIKEKVLALAIEHYDEKVRKVGRPVISQFEKSIILQTLDNHWREHLAAMDQLRQGIHLRGYAQKDPKQEYKKEAFSLFTMMLDNLKYEVIRILSSVEIQTEEDAQVVEEQRRADQIRKMNLMHESLSENDEASETQTFRRQEKKIGRNDPCPCGSGKKYKACHGSLV.

Residues Gln-87, 105-109 (GEGKT), and Asp-507 each bind ATP. Residues 853 to 879 (ESLSENDEASETQTFRRQEKKIGRNDP) form a disordered region. Basic and acidic residues predominate over residues 866–876 (TFRRQEKKIGR). Zn(2+)-binding residues include Cys-880, Cys-882, Cys-891, and His-892.

The protein belongs to the SecA family. As to quaternary structure, monomer and homodimer. Part of the essential Sec protein translocation apparatus which comprises SecA, SecYEG and auxiliary proteins SecDF-YajC and YidC. It depends on Zn(2+) as a cofactor.

The protein resides in the cell inner membrane. It is found in the cytoplasm. The catalysed reaction is ATP + H2O + cellular proteinSide 1 = ADP + phosphate + cellular proteinSide 2.. In terms of biological role, part of the Sec protein translocase complex. Interacts with the SecYEG preprotein conducting channel. Has a central role in coupling the hydrolysis of ATP to the transfer of proteins into and across the cell membrane, serving both as a receptor for the preprotein-SecB complex and as an ATP-driven molecular motor driving the stepwise translocation of polypeptide chains across the membrane. This chain is Protein translocase subunit SecA, found in Legionella pneumophila (strain Corby).